A 152-amino-acid polypeptide reads, in one-letter code: Ribosome maturation factor RimP (152 aa).

Belongs to the RimP family.

The protein localises to the cytoplasm. In terms of biological role, required for maturation of 30S ribosomal subunits. The polypeptide is Ribosome maturation factor RimP (Stutzerimonas stutzeri (strain A1501) (Pseudomonas stutzeri)).